Here is a 134-residue protein sequence, read N- to C-terminus: Phosphomevalonate dehydratase small subunit (134 aa).

Catalysis depends on serine 62, which acts as the Proton acceptor.

Belongs to the AcnX type II small subunit family. In terms of assembly, heterodimer composed of a large subunit (PMDh-L) and a small subunit (PMDh-S).

It carries out the reaction (R)-5-phosphomevalonate = (2E)-3-methyl-5-phosphooxypent-2-enoate + H2O. It participates in isoprenoid biosynthesis; isopentenyl diphosphate biosynthesis via mevalonate pathway. Component of a hydro-lyase that catalyzes the dehydration of mevalonate 5-phosphate (MVA5P) to form trans-anhydromevalonate 5-phosphate (tAHMP). Involved in the archaeal mevalonate (MVA) pathway, which provides fundamental precursors for isoprenoid biosynthesis, such as isopentenyl diphosphate (IPP) and dimethylallyl diphosphate (DMAPP). This Pyrococcus horikoshii (strain ATCC 700860 / DSM 12428 / JCM 9974 / NBRC 100139 / OT-3) protein is Phosphomevalonate dehydratase small subunit.